We begin with the raw amino-acid sequence, 91 residues long: Small ribosomal subunit protein uS15 (91 aa).

This sequence belongs to the universal ribosomal protein uS15 family. Part of the 30S ribosomal subunit. Forms a bridge to the 50S subunit in the 70S ribosome, contacting the 23S rRNA.

In terms of biological role, one of the primary rRNA binding proteins, it binds directly to 16S rRNA where it helps nucleate assembly of the platform of the 30S subunit by binding and bridging several RNA helices of the 16S rRNA. Its function is as follows. Forms an intersubunit bridge (bridge B4) with the 23S rRNA of the 50S subunit in the ribosome. This chain is Small ribosomal subunit protein uS15, found in Synechococcus sp. (strain JA-2-3B'a(2-13)) (Cyanobacteria bacterium Yellowstone B-Prime).